Consider the following 962-residue polypeptide: Protease 3 (962 aa).

The first 23 residues, 1–23 (MPRSTWFKALLLLVALWGPAVQA), serve as a signal peptide directing secretion. Zn(2+) is bound at residue His88. Glu91 acts as the Proton acceptor in catalysis. His92 and Glu169 together coordinate Zn(2+).

It belongs to the peptidase M16 family. Monomer. Zn(2+) serves as cofactor.

It localises to the periplasm. It catalyses the reaction Preferential cleavage of 16-Tyr-|-Leu-17 and 25-Phe-|-Tyr-26 bonds of oxidized insulin B chain. Also acts on other substrates of Mw less than 7 kDa such as insulin and glucagon.. Endopeptidase that degrades small peptides of less than 7 kDa, such as glucagon and insulin. This is Protease 3 (ptrA) from Salmonella typhi.